The following is a 777-amino-acid chain: MFPRGAEAQDWHLDMQLTGKVVLSAAALLLVTVAYRLYKSRPAPAQRWGGNGQAEAKEEAEGSGQPAVQEASPGVLLRGPRRRRSSKRAEAPQGCSCENPRGPYVLVTGATSTDRKPQRKGSGEERGGQGSDSEQVPPCCPSQETRTAVGSNPDPPHFPRLGSEPKSSPAGLIAAADGSCAGGEPSPWQDSKPREHPGLGQLEPPHCHYVAPLQGSSDMNQSWVFTRVIGVSREEAGALEAASDVDLTLHQQEGAPNSSYTFSSIARVRMEEHFIQKAEGVEPRLKGKVYDYYVESTSQAIFQGRLAPRTAALTEVPSPRPPPGSLGTGAASGGQAGDTKGAAERAASPQTGPWPSTRGFSRKESLLQIAENPELQLQPDGFRLPAPPCPDPGALPGLGRSSREPHVQPVAGTNFFHIPLTPASAPQVRLDLGNCYEVLTLAKRQNLEALKEAAYKVMSENYLQVLRSPDIYGCLSGAERELILQRRLRGRQYLVVADVCPKEDSGGLCCYDDEQDVWRPLARMPPEAVSRGCAICSLFNYLFVVSGCQGPGHQPSSRVFCYNPLTGIWSEVCPLNQARPHCRLVALDGHLYAIGGECLNSVERYDPRLDRWDFAPPLPSDTFALAHTATVRAKEIFVTGGSLRFLLFRFSAQEQRWWAGPTGGSKDRTAEMVAVNGFLYRFDLNRSLGIAVYRCSASTRLWYECATYRTPYPDAFQCAVVDNLIYCVGRRSTLCFLADSVSPRFVPKELRSFPAPQGTLLPTVLTLPTPDLPQTRV.

A helical membrane pass occupies residues 21–38 (VVLSAAALLLVTVAYRLY). The tract at residues 43–207 (APAQRWGGNG…GLGQLEPPHC (165 aa)) is disordered. Residue Ser86 is modified to Phosphoserine. Positions 113–127 (TDRKPQRKGSGEERG) are enriched in basic and acidic residues. N-linked (GlcNAc...) asparagine glycosylation occurs at Asn257. The tract at residues 313–359 (LTEVPSPRPPPGSLGTGAASGGQAGDTKGAAERAASPQTGPWPSTRG) is disordered. A compositionally biased stretch (gly residues) spans 326-336 (LGTGAASGGQA). 5 Kelch repeats span residues 328–374 (TGAA…ENPE), 492–538 (QYLV…ICSL), 541–589 (YLFV…ALDG), 590–632 (HLYA…ATVR), and 635–677 (EIFV…AVNG). A Phosphoserine modification is found at Ser365.

It localises to the membrane. The polypeptide is Kelch domain-containing protein 7A (KLHDC7A) (Homo sapiens (Human)).